Consider the following 1361-residue polypeptide: DNA-directed RNA polymerase subunit beta (1361 aa).

The protein belongs to the RNA polymerase beta chain family. In terms of assembly, the RNAP catalytic core consists of 2 alpha, 1 beta, 1 beta' and 1 omega subunit. When a sigma factor is associated with the core the holoenzyme is formed, which can initiate transcription.

The enzyme catalyses RNA(n) + a ribonucleoside 5'-triphosphate = RNA(n+1) + diphosphate. Functionally, DNA-dependent RNA polymerase catalyzes the transcription of DNA into RNA using the four ribonucleoside triphosphates as substrates. The sequence is that of DNA-directed RNA polymerase subunit beta from Saccharophagus degradans (strain 2-40 / ATCC 43961 / DSM 17024).